The chain runs to 306 residues: Putative HPr kinase/phosphorylase 2 (306 aa).

Catalysis depends on residues His-138 and Lys-159. 153–160 contributes to the ATP binding site; it reads GESGVGKS. Ser-160 is a binding site for Mg(2+). Asp-177 acts as the Proton acceptor; for phosphorylation activity. Proton donor; for dephosphorylation activity in catalysis. The segment at 201-210 is important for the catalytic mechanism of both phosphorylation and dephosphorylation; it reads LALRSVGLLN. The interval 264 to 269 is important for the catalytic mechanism of dephosphorylation; the sequence is QLQPGR.

The protein belongs to the HPrK/P family. In terms of assembly, homohexamer. Mg(2+) is required as a cofactor.

The catalysed reaction is [HPr protein]-L-serine + ATP = [HPr protein]-O-phospho-L-serine + ADP + H(+). It catalyses the reaction [HPr protein]-O-phospho-L-serine + phosphate + H(+) = [HPr protein]-L-serine + diphosphate. Its function is as follows. Catalyzes the ATP- as well as the pyrophosphate-dependent phosphorylation of a specific serine residue in HPr, a phosphocarrier protein of the phosphoenolpyruvate-dependent sugar phosphotransferase system (PTS). HprK/P also catalyzes the pyrophosphate-producing, inorganic phosphate-dependent dephosphorylation (phosphorolysis) of seryl-phosphorylated HPr (P-Ser-HPr). The two antagonistic activities of HprK/P are regulated by several intracellular metabolites, which change their concentration in response to the absence or presence of rapidly metabolisable carbon sources (glucose, fructose, etc.) in the growth medium. Also phosphorylates/dephosphorylates the HPr-like catabolite repression protein crh on a specific serine residue. Therefore, by controlling the phosphorylation state of HPr and crh, HPrK/P is a sensor enzyme that plays a major role in the regulation of carbon metabolism and sugar transport: it mediates carbon catabolite repression (CCR), and regulates PTS-catalyzed carbohydrate uptake and inducer exclusion. The protein is Putative HPr kinase/phosphorylase 2 (hprK2) of Oceanobacillus iheyensis (strain DSM 14371 / CIP 107618 / JCM 11309 / KCTC 3954 / HTE831).